A 532-amino-acid polypeptide reads, in one-letter code: Intercellular adhesion molecule 1 (532 aa).

The N-terminal stretch at 1–27 (MAPSGPQPALPILVVLLGALLLGPGNA) is a signal peptide. Topologically, residues 28–480 (QTSVFPPEVI…TVNVLSPRYE (453 aa)) are extracellular. Ig-like C2-type domains lie at 41–103 (GGSV…QSSA) and 128–193 (GKNL…LDLR). A glycan (N-linked (GlcNAc...) asparagine) is linked at N47. Cystine bridges form between C48–C92 and C52–C96. N130 and N145 each carry an N-linked (GlcNAc...) asparagine glycan. Residues C135 and C186 are joined by a disulfide bond. Residues 152–154 (RGE) carry the Cell attachment site; atypical motif. N183, N202, N267, N296, and N316 each carry an N-linked (GlcNAc...) asparagine glycan. The region spanning 230–297 (DTQGTVVCSL…LLCGVMLGNQ (68 aa)) is the Ig-like C2-type 3 domain. C237 and C290 are disulfide-bonded. Positions 325–378 (GTEVIVECEAHPRAKVMLNGVPAQPPGPRAQFLLKATPEDNGRSFSCSATLEVA) constitute an Ig-like C2-type 4 domain. An intrachain disulfide couples C332 to C371. Residues N385 and N406 are each glycosylated (N-linked (GlcNAc...) asparagine). Intrachain disulfides connect C403–C419, C419–C457, and C431–C457. The Ig-like C2-type 5 domain maps to 412–464 (NSQQTPMCQAWGNPLPQLKCLKDGTFPLPIGQSVTVTRDLEGTYLCQARSTRG). The chain crosses the membrane as a helical span at residues 481–503 (VVIIPVVAAAVILGTAGVATYLY). Residues 504-532 (NRQRKIRKYRLQQAQNGTPMKPNTQATPP) are Cytoplasmic-facing. A disordered region spans residues 513–532 (RLQQAQNGTPMKPNTQATPP). The segment covering 515–532 (QQAQNGTPMKPNTQATPP) has biased composition (polar residues). Phosphothreonine occurs at positions 521 and 530.

It belongs to the immunoglobulin superfamily. ICAM family. In terms of assembly, homodimer. Interacts with MUC1 and promotes cell aggregation in epithelial cells. Interacts with ARHGEF26/SGEF. Interacts (on T cell side) with CD81, CD247 and CD9 at immunological synapses between antigen-presenting cells and T cells. Post-translationally, monoubiquitinated, which is promoted by MARCH9 and leads to endocytosis.

It is found in the membrane. Functionally, ICAM proteins are ligands for the leukocyte adhesion protein LFA-1 (integrin alpha-L/beta-2). During leukocyte trans-endothelial migration, ICAM1 engagement promotes the assembly of endothelial apical cups through ARHGEF26/SGEF and RHOG activation. The sequence is that of Intercellular adhesion molecule 1 (ICAM1) from Macaca mulatta (Rhesus macaque).